A 355-amino-acid polypeptide reads, in one-letter code: 3-isopropylmalate dehydrogenase (355 aa).

4 residues coordinate substrate: Arg98, Arg108, Arg132, and Asp223. Asp223, Asp247, and Asp251 together coordinate Mg(2+). An NAD(+)-binding site is contributed by 283–295; sequence GSAPDIAGQQKAD.

This sequence belongs to the isocitrate and isopropylmalate dehydrogenases family. LeuB type 2 subfamily. In terms of assembly, homodimer. Requires Mg(2+) as cofactor. Mn(2+) serves as cofactor.

The protein localises to the cytoplasm. It carries out the reaction (2R,3S)-3-isopropylmalate + NAD(+) = 4-methyl-2-oxopentanoate + CO2 + NADH. It functions in the pathway amino-acid biosynthesis; L-leucine biosynthesis; L-leucine from 3-methyl-2-oxobutanoate: step 3/4. Functionally, catalyzes the oxidation of 3-carboxy-2-hydroxy-4-methylpentanoate (3-isopropylmalate) to 3-carboxy-4-methyl-2-oxopentanoate. The product decarboxylates to 4-methyl-2 oxopentanoate. The sequence is that of 3-isopropylmalate dehydrogenase from Clavibacter michiganensis subsp. michiganensis (strain NCPPB 382).